We begin with the raw amino-acid sequence, 272 residues long: Ribonuclease HII (272 aa).

In terms of domain architecture, RNase H type-2 spans 87-272 (KYVAGVDEVG…HRMSFLKNIL (186 aa)). A divalent metal cation is bound by residues Asp93, Glu94, and Asp188.

The protein belongs to the RNase HII family. It depends on Mn(2+) as a cofactor. Mg(2+) serves as cofactor.

It localises to the cytoplasm. The catalysed reaction is Endonucleolytic cleavage to 5'-phosphomonoester.. Endonuclease that specifically degrades the RNA of RNA-DNA hybrids. The polypeptide is Ribonuclease HII (Clostridium perfringens (strain 13 / Type A)).